We begin with the raw amino-acid sequence, 510 residues long: Leucine-rich repeat protein lrrA (510 aa).

20 LRR repeats span residues 14-34 (YRKREIVDLRKMNIDKLPPTI), 35-59 (GALQCKELLLSENDLITIPEEIGKL), 60-82 (SKVEIIDFAKNRINYIPPEIGSL), 84-106 (TLKQLFLSNNKLFYTPITPNIGA), 107-130 (LKNLTRLDLSSNQLDDLPVEISNC), 132-152 (ALEYLDISDNQLQSFPLEFGK), 153-176 (LYNLQVFNCSKNSLKSLPSEISGW), 177-200 (VKLEELNVSNNQLAFLPNQICLLG), 202-222 (LSTLNVGFNKLQQLPEELSSM), 224-245 (SLTNLDLKVNPPLQYVPQLSNL), 246-270 (RQLKILSIRNLQITHLPLGLGLLSE), 272-292 (IELDIRDNPQLKEIPYDIATL), 293-315 (INLQKLDLFGNNMRIVPREVGNL), 316-340 (INLQTLDLRQNKLTIDNIPSEIGKL), 341-363 (VNLKKLLLSNNLLIALPPEIASM), 365-386 (ALKEFEASNNQLQAIPTEIGEL), 387-408 (SGLTKINLSGNKLTSIPASFGN), 410-432 (SELQICDLKSNEIAELPTTLDGL), 433-458 (KSCTKIDLSHNMLTELPWEFGDLIGL), and 460-478 (ILDVGHNPLTIPPNPIVMK).

The protein localises to the cytoplasm. Involved in cytoskeleton remodeling, which is needed for normal chemotactic aggregation and efficient cell sorting during multicellular morphogenesis. The sequence is that of Leucine-rich repeat protein lrrA (lrrA) from Dictyostelium discoideum (Social amoeba).